Here is a 687-residue protein sequence, read N- to C-terminus: Acetyl-coenzyme A synthetase 2 (687 aa).

CoA contacts are provided by residues 206-209 and Thr-325; that span reads RGGK. ATP contacts are provided by residues 401–403, 425–430, Asp-516, and Arg-531; these read GEP and DTMWQT. CoA is bound at residue Ser-539. Position 542 (Arg-542) interacts with ATP. CoA is bound at residue Arg-617.

This sequence belongs to the ATP-dependent AMP-binding enzyme family.

The catalysed reaction is acetate + ATP + CoA = acetyl-CoA + AMP + diphosphate. This Eremothecium gossypii (strain ATCC 10895 / CBS 109.51 / FGSC 9923 / NRRL Y-1056) (Yeast) protein is Acetyl-coenzyme A synthetase 2 (ACS2).